An 815-amino-acid polypeptide reads, in one-letter code: Ataxin-1 (815 aa).

The segment covering 1 to 41 (MKSNQERSNECLPPKKREIPATSRSSEEKAPTLPSDNHRVE) has biased composition (basic and acidic residues). Residues 1–63 (MKSNQERSNE…GHGGGRHGPA (63 aa)) are disordered. Residue lysine 16 forms a Glycyl lysine isopeptide (Lys-Gly) (interchain with G-Cter in SUMO) linkage. Residues 49–61 (NPGGRGHGGGRHG) show a composition bias toward gly residues. Residues serine 82 and serine 88 each carry the phosphoserine modification. Disordered regions lie at residues 185–270 (GSLS…PVHL), 329–355 (EKSR…VPHP), and 397–424 (VQQA…PGHR). A Glycyl lysine isopeptide (Lys-Gly) (interchain with G-Cter in SUMO) cross-link involves residue lysine 194. Residues 197-226 (QQQQQQQQQQQQHQHQQQQQQQQQQQQQQH) show a composition bias toward low complexity. Residues serine 238 and serine 253 each carry the phosphoserine modification. Positions 243-260 (QQNQYVHISSSPQNTGRT) are enriched in polar residues. Residues 494 to 604 (VGSTDMEASG…TEDFIQSAEI (111 aa)) form a self-association region. The interval 538-815 (LVTQAAYPAM…CIEGRSNVGK (278 aa)) is interaction with USP7. The tract at residues 540–766 (TQAAYPAMVQ…FLTKIEPSKP (227 aa)) is RNA-binding. The region spanning 562–693 (SPAAAPPTLP…SLTLKNLKNG (132 aa)) is the AXH domain. Glycyl lysine isopeptide (Lys-Gly) (interchain with G-Cter in SUMO) cross-links involve residues lysine 609, lysine 696, and lysine 745. The disordered stretch occupies residues 762 to 798 (EPSKPAATRKRRWSAPESRKLEKSEDEPPLTLPKPSL). The residue at position 775 (serine 775) is a Phosphoserine. The Nuclear localization signal motif lies at 794–797 (PKPS).

Belongs to the ATXN1 family. As to quaternary structure, homooligomer. Interacts with CIC. Interacts with ANP32A, PQBP1, UBQLN4, ATXN1L and USP7. Directly interacts with RBPJ; this interaction is disrupted in the presence of Notch intracellular domain. Competes with ATXN1L for RBPJ-binding. Found in a complex with CIC and ATXN1L. Ubiquitinated by UBE3A, leading to its degradation by the proteasome. The presence of expanded poly-Gln repeats in spinocerebellar ataxia 1 (SCA1) patients impairs ubiquitination and degradation, leading to accumulation of ATXN1 in neurons and subsequent toxicity. In terms of processing, phosphorylation at Ser-775 increases the pathogenicity of proteins with an expanded polyglutamine tract. Post-translationally, sumoylation is dependent on nuclear localization and phosphorylation at Ser-775. It is reduced in the presence of an expanded polyglutamine tract. Widely expressed throughout the body.

The protein resides in the cytoplasm. Its subcellular location is the nucleus. Functionally, chromatin-binding factor that repress Notch signaling in the absence of Notch intracellular domain by acting as a CBF1 corepressor. Binds to the HEY promoter and might assist, along with NCOR2, RBPJ-mediated repression. Binds RNA in vitro. May be involved in RNA metabolism. In concert with CIC and ATXN1L, involved in brain development. This chain is Ataxin-1 (ATXN1), found in Homo sapiens (Human).